The primary structure comprises 388 residues: MMKKSIINTLIFTSIATFPLYTLAQTKLTELQVATIVNNTLTPLLEKQGIPGMAVAVFYDGKPQFFNYGMADIKAGRPVTENTLFELGSVSKTFTGVAGEYAMQTGIMNLNDPVTEYAPELTGSQWKDVKMLHLATYTAGGLPLQLPDSVTDQKSLWQYYQQWQPQWAPGVMRNYSNASIGLFGALAVKRSQLTFENYMKEYVFQPLKLDHTFITIPESMQSNYAWGYKDGQPVRVTLGMLGEEAYGVKSTSQDMVRFMQANMDPESLPAGNDKLKEAIIASQSRYFQAGDMFQGLGWEMYSWPINPQGVIADSGNDIALKPRKVEALVPAQPAVRASWVHKTGATNGFGAYIVFIPEEKVGIVMLANKNYPNPVRVQAAYDILQALR.

The first 24 residues, 1-24 (MMKKSIINTLIFTSIATFPLYTLA), serve as a signal peptide directing secretion. The active-site Acyl-ester intermediate is the Ser-89. Tyr-175 (proton acceptor) is an active-site residue. Residue 342 to 344 (KTG) coordinates substrate.

Belongs to the class-C beta-lactamase family.

It localises to the periplasm. The enzyme catalyses a beta-lactam + H2O = a substituted beta-amino acid. Functionally, this protein is a serine beta-lactamase with a substrate specificity for cephalosporins. In Yersinia enterocolitica, this protein is Beta-lactamase (ampC).